A 378-amino-acid polypeptide reads, in one-letter code: Forkhead box protein I1 (378 aa).

Disordered regions lie at residues 1-26 (MSSF…QEPP) and 208-278 (DNGN…APCL). The fork-head DNA-binding region spans 123 to 217 (RPPYSYSALI…DNGNFRRKRK (95 aa)). Over residues 236–248 (SSLPVDSPKTTEP) the composition is skewed to polar residues.

In terms of tissue distribution, expressed in kidney.

It localises to the nucleus. Functionally, transcriptional activator required for the development of normal hearing, sense of balance and kidney function. Required for the expression of SLC26A4/PDS, JAG1 and COCH in a subset of epithelial cells and the development of the endolymphatic system in the inner ear. Also required for the expression of SLC4A1/AE1, SLC4A9/AE4, ATP6V1B1 and the differentiation of intercalated cells in the epithelium of distal renal tubules. The polypeptide is Forkhead box protein I1 (FOXI1) (Homo sapiens (Human)).